Consider the following 313-residue polypeptide: 4-diphosphocytidyl-2-C-methyl-D-erythritol kinase (313 aa).

The active site involves K10. Position 95–105 (95–105 (PVTAGLGGGSS)) interacts with ATP. D136 is a catalytic residue. The disordered stretch occupies residues 289–313 (HPRVSPWRSPRSASSRSTRRSSRPT). Low complexity predominate over residues 292-304 (VSPWRSPRSASSR).

It belongs to the GHMP kinase family. IspE subfamily.

The catalysed reaction is 4-CDP-2-C-methyl-D-erythritol + ATP = 4-CDP-2-C-methyl-D-erythritol 2-phosphate + ADP + H(+). It functions in the pathway isoprenoid biosynthesis; isopentenyl diphosphate biosynthesis via DXP pathway; isopentenyl diphosphate from 1-deoxy-D-xylulose 5-phosphate: step 3/6. In terms of biological role, catalyzes the phosphorylation of the position 2 hydroxy group of 4-diphosphocytidyl-2C-methyl-D-erythritol. The chain is 4-diphosphocytidyl-2-C-methyl-D-erythritol kinase from Anaeromyxobacter dehalogenans (strain 2CP-1 / ATCC BAA-258).